A 326-amino-acid chain; its full sequence is Protein phosphatase PTC7 homolog fig (326 aa).

The interval valine 40 to lysine 83 is disordered. Residues arginine 64 to valine 314 enclose the PPM-type phosphatase domain. Mn(2+)-binding residues include aspartate 91, glycine 92, and aspartate 236.

It belongs to the PP2C family. It depends on Mg(2+) as a cofactor. Requires Mn(2+) as cofactor.

It catalyses the reaction O-phospho-L-seryl-[protein] + H2O = L-seryl-[protein] + phosphate. The enzyme catalyses O-phospho-L-threonyl-[protein] + H2O = L-threonyl-[protein] + phosphate. This is Protein phosphatase PTC7 homolog fig from Drosophila persimilis (Fruit fly).